Consider the following 273-residue polypeptide: Mitochondrial distribution and morphology protein 12 (273 aa).

Residues 1–260 (MSFDINWEQL…WPSWINFDFY (260 aa)) enclose the SMP-LTD domain. A disordered region spans residues 76-98 (MSAEEETEGSDDEGYGGDRVRNR). The segment covering 78-90 (AEEETEGSDDEGY) has biased composition (acidic residues).

The protein belongs to the MDM12 family. Component of the ER-mitochondria encounter structure (ERMES) or MDM complex, composed of MMM1, MDM10, MDM12 and MDM34. An MMM1 homodimer associates with one molecule of MDM12 on each side in a pairwise head-to-tail manner, and the SMP-LTD domains of MMM1 and MDM12 generate a continuous hydrophobic tunnel for phospholipid trafficking.

The protein resides in the mitochondrion outer membrane. The protein localises to the endoplasmic reticulum membrane. In terms of biological role, component of the ERMES/MDM complex, which serves as a molecular tether to connect the endoplasmic reticulum (ER) and mitochondria. Components of this complex are involved in the control of mitochondrial shape and protein biogenesis, and function in nonvesicular lipid trafficking between the ER and mitochondria. MDM12 is required for the interaction of the ER-resident membrane protein MMM1 and the outer mitochondrial membrane-resident beta-barrel protein MDM10. The MDM12-MMM1 subcomplex functions in the major beta-barrel assembly pathway that is responsible for biogenesis of all mitochondrial outer membrane beta-barrel proteins, and acts in a late step after the SAM complex. The MDM10-MDM12-MMM1 subcomplex further acts in the TOM40-specific pathway after the action of the MDM12-MMM1 complex. Essential for establishing and maintaining the structure of mitochondria and maintenance of mtDNA nucleoids. The polypeptide is Mitochondrial distribution and morphology protein 12 (Vanderwaltozyma polyspora (strain ATCC 22028 / DSM 70294 / BCRC 21397 / CBS 2163 / NBRC 10782 / NRRL Y-8283 / UCD 57-17) (Kluyveromyces polysporus)).